The sequence spans 195 residues: Imidazoleglycerol-phosphate dehydratase (195 aa).

The protein belongs to the imidazoleglycerol-phosphate dehydratase family.

Its subcellular location is the cytoplasm. The catalysed reaction is D-erythro-1-(imidazol-4-yl)glycerol 3-phosphate = 3-(imidazol-4-yl)-2-oxopropyl phosphate + H2O. It functions in the pathway amino-acid biosynthesis; L-histidine biosynthesis; L-histidine from 5-phospho-alpha-D-ribose 1-diphosphate: step 6/9. This Methylobacterium radiotolerans (strain ATCC 27329 / DSM 1819 / JCM 2831 / NBRC 15690 / NCIMB 10815 / 0-1) protein is Imidazoleglycerol-phosphate dehydratase.